A 198-amino-acid chain; its full sequence is Holliday junction branch migration complex subunit RuvA (198 aa).

The interval 1-63 (MYDYIKGQLT…EDAQLLFGFH (63 aa)) is domain I. Residues 64 to 142 (SEEEKDVFLK…EAPKEESSKL (79 aa)) are domain II. Positions 143 to 147 (PKAKH) are flexible linker. Residues 148–198 (QENEQLDEAIEALLALGYKATELKKIRAFFEGTSETAEQYIKSALKMLMKG) form a domain III region.

Belongs to the RuvA family. Homotetramer. Forms an RuvA(8)-RuvB(12)-Holliday junction (HJ) complex. HJ DNA is sandwiched between 2 RuvA tetramers; dsDNA enters through RuvA and exits via RuvB. An RuvB hexamer assembles on each DNA strand where it exits the tetramer. Each RuvB hexamer is contacted by two RuvA subunits (via domain III) on 2 adjacent RuvB subunits; this complex drives branch migration. In the full resolvosome a probable DNA-RuvA(4)-RuvB(12)-RuvC(2) complex forms which resolves the HJ.

It localises to the cytoplasm. Functionally, the RuvA-RuvB-RuvC complex processes Holliday junction (HJ) DNA during genetic recombination and DNA repair, while the RuvA-RuvB complex plays an important role in the rescue of blocked DNA replication forks via replication fork reversal (RFR). RuvA specifically binds to HJ cruciform DNA, conferring on it an open structure. The RuvB hexamer acts as an ATP-dependent pump, pulling dsDNA into and through the RuvAB complex. HJ branch migration allows RuvC to scan DNA until it finds its consensus sequence, where it cleaves and resolves the cruciform DNA. This chain is Holliday junction branch migration complex subunit RuvA, found in Streptococcus equi subsp. zooepidemicus (strain MGCS10565).